Consider the following 478-residue polypeptide: Cysteine--tRNA ligase (478 aa).

Cysteine 29 is a binding site for Zn(2+). A 'HIGH' region motif is present at residues 31–41 (VTVYDYCHLGH). Positions 213, 238, and 242 each coordinate Zn(2+). The 'KMSKS' region signature appears at 270–274 (KMSKS). Lysine 273 is a binding site for ATP.

It belongs to the class-I aminoacyl-tRNA synthetase family. As to quaternary structure, monomer. Zn(2+) is required as a cofactor.

Its subcellular location is the cytoplasm. The enzyme catalyses tRNA(Cys) + L-cysteine + ATP = L-cysteinyl-tRNA(Cys) + AMP + diphosphate. The chain is Cysteine--tRNA ligase from Synechococcus sp. (strain ATCC 27144 / PCC 6301 / SAUG 1402/1) (Anacystis nidulans).